The primary structure comprises 339 residues: Large ribosomal subunit protein uL10 (339 aa).

The interval 300–339 (AAAQATPSVEEREEEEKPEEEEEEEEKEEEAIEGLGALFG) is disordered. A compositionally biased stretch (acidic residues) spans 310–331 (EREEEEKPEEEEEEEEKEEEAI).

Belongs to the universal ribosomal protein uL10 family. In terms of assembly, part of the 50S ribosomal subunit. Forms part of the ribosomal stalk which helps the ribosome interact with GTP-bound translation factors. Forms a heptameric L10(L12)2(L12)2(L12)2 complex, where L10 forms an elongated spine to which the L12 dimers bind in a sequential fashion.

Forms part of the ribosomal stalk, playing a central role in the interaction of the ribosome with GTP-bound translation factors. This chain is Large ribosomal subunit protein uL10, found in Archaeoglobus fulgidus (strain ATCC 49558 / DSM 4304 / JCM 9628 / NBRC 100126 / VC-16).